The sequence spans 470 residues: MRAVRCSLIRGVAGLRMASSALDEMKEQMLRRWKEDQKKIDDLRKKHGHEKLCDATIDAVYGGMRGITGLVYEPSLLDPAEGIRFRGLTILECQEMLPKAPGGKEPLPEAMFWLLMTGEVPTEEQVRGLNAELHRRADPEAIAAAQKAIAALPRNAHPMTAFSVGVLALQSYSKFAAAYAAGKSNKKTYWEYALEDSLDMLARTPTVAAMIYNRETKGQVELAAPSNSDLDWAANFAKMMGYQDEEFWECMRLYLSVHADHEGGNVSAHTTTLVASALSDPYLAFSAGLNGLAGPLHGLANQEVLNYLLSMQERVKADGVNMHDEAALEKALSNYTWELLNSGQVVPGYGHAVLRKVDPRYTCQRNFCLRHKFDDDLFKLVNTIYSIMPGILKEHGKTKNPYPNVDAHSGVLLQHYGLTEQNYYTVLFGLSRQMGVLAGVVWDRLQGRPLERPKSITTEMLAKKYLCNSL.

Active-site residues include histidine 297, histidine 351, and aspartate 406.

This sequence belongs to the citrate synthase family. In terms of assembly, homodimer.

The protein localises to the mitochondrion matrix. The enzyme catalyses oxaloacetate + acetyl-CoA + H2O = citrate + CoA + H(+). The protein operates within carbohydrate metabolism; tricarboxylic acid cycle; isocitrate from oxaloacetate: step 1/2. The polypeptide is Probable citrate synthase, mitochondrial (Leishmania major).